A 334-amino-acid polypeptide reads, in one-letter code: HTH-type transcriptional repressor PurR (334 aa).

The 55-residue stretch at 2–56 (ATIKDVARLAGVSTTTVSHVINKTRFVAETTQEKVMKAVDELNYAPSAVARSLKC) folds into the HTH lacI-type domain. Positions 4–23 (IKDVARLAGVSTTTVSHVIN) form a DNA-binding region, H-T-H motif. Residues 48 to 56 (SAVARSLKC) mediate DNA binding. Hypoxanthine-binding residues include Phe-73, Lys-189, Phe-220, and Asp-274.

As to quaternary structure, homodimer.

It participates in purine metabolism; purine nucleotide biosynthesis [regulation]. Its function is as follows. Is the main repressor of the genes involved in the de novo synthesis of purine nucleotides, regulating purB, purC, purEK, purF, purHD, purL, purMN and guaBA expression. PurR is allosterically activated to bind its cognate DNA by binding the purine corepressors, hypoxanthine or guanine, thereby effecting transcription repression. This Vibrio campbellii (strain ATCC BAA-1116) protein is HTH-type transcriptional repressor PurR.